Consider the following 59-residue polypeptide: Large ribosomal subunit protein uL30 (59 aa).

The protein belongs to the universal ribosomal protein uL30 family. In terms of assembly, part of the 50S ribosomal subunit.

The protein is Large ribosomal subunit protein uL30 of Leptospira biflexa serovar Patoc (strain Patoc 1 / ATCC 23582 / Paris).